We begin with the raw amino-acid sequence, 296 residues long: MIKVYNRITNEYEEENVAGKKFIKWTYETPVGKSITELIAKRKIFSKFYGKFCDTKCSAKKIPDFVRDFNIDMNIAEKNISEFNSFNDFFVRNLTSTSRPIDYNEDIFISPGDGRITVYDNIDLDNIVQVKGLTYSLRELIKNDEISERYKDGICIILRLCPTDYHRFHFVDSGIPCETHKIKGHYYSVNPIALNSIPKLFCENKREWCIFKSENFGDVLTVEVGATCVGSIIQTYEPNKKAKKGDEKGYFKFGGSTTILFLEKDKVKIDDDILEQSKQGYECKVLLGETIGTKVL.

Active-site charge relay system; for autoendoproteolytic cleavage activity residues include Asp113, His169, and Ser256. Residue Ser256 is the Schiff-base intermediate with substrate; via pyruvic acid; for decarboxylase activity of the active site. Pyruvic acid (Ser); by autocatalysis is present on Ser256.

This sequence belongs to the phosphatidylserine decarboxylase family. PSD-B subfamily. Prokaryotic type II sub-subfamily. Heterodimer of a large membrane-associated beta subunit and a small pyruvoyl-containing alpha subunit. Pyruvate serves as cofactor. In terms of processing, is synthesized initially as an inactive proenzyme. Formation of the active enzyme involves a self-maturation process in which the active site pyruvoyl group is generated from an internal serine residue via an autocatalytic post-translational modification. Two non-identical subunits are generated from the proenzyme in this reaction, and the pyruvate is formed at the N-terminus of the alpha chain, which is derived from the carboxyl end of the proenzyme. The autoendoproteolytic cleavage occurs by a canonical serine protease mechanism, in which the side chain hydroxyl group of the serine supplies its oxygen atom to form the C-terminus of the beta chain, while the remainder of the serine residue undergoes an oxidative deamination to produce ammonia and the pyruvoyl prosthetic group on the alpha chain. During this reaction, the Ser that is part of the protease active site of the proenzyme becomes the pyruvoyl prosthetic group, which constitutes an essential element of the active site of the mature decarboxylase.

The protein resides in the cell membrane. The enzyme catalyses a 1,2-diacyl-sn-glycero-3-phospho-L-serine + H(+) = a 1,2-diacyl-sn-glycero-3-phosphoethanolamine + CO2. The protein operates within phospholipid metabolism; phosphatidylethanolamine biosynthesis; phosphatidylethanolamine from CDP-diacylglycerol: step 2/2. Catalyzes the formation of phosphatidylethanolamine (PtdEtn) from phosphatidylserine (PtdSer). This Clostridium botulinum (strain Eklund 17B / Type B) protein is Phosphatidylserine decarboxylase proenzyme.